Here is a 156-residue protein sequence, read N- to C-terminus: Small ribosomal subunit protein uS7 (156 aa).

This sequence belongs to the universal ribosomal protein uS7 family. In terms of assembly, part of the 30S ribosomal subunit. Contacts proteins S9 and S11.

Its function is as follows. One of the primary rRNA binding proteins, it binds directly to 16S rRNA where it nucleates assembly of the head domain of the 30S subunit. Is located at the subunit interface close to the decoding center, probably blocks exit of the E-site tRNA. This Moorella thermoacetica (strain ATCC 39073 / JCM 9320) protein is Small ribosomal subunit protein uS7.